A 255-amino-acid chain; its full sequence is 5'-nucleotidase SurE (255 aa).

A divalent metal cation is bound by residues Asp-8, Asp-9, Ser-40, and Asn-92.

This sequence belongs to the SurE nucleotidase family. Requires a divalent metal cation as cofactor.

It localises to the cytoplasm. The enzyme catalyses a ribonucleoside 5'-phosphate + H2O = a ribonucleoside + phosphate. Functionally, nucleotidase that shows phosphatase activity on nucleoside 5'-monophosphates. This chain is 5'-nucleotidase SurE, found in Brucella abortus (strain S19).